Consider the following 209-residue polypeptide: uncharacterized protein (209 aa).

A coiled-coil region spans residues 41–76; it reads NVENLCLIRNKLKTDIENLLENKIDVENKLLVLRNQ.

This is an uncharacterized protein from Acanthamoeba polyphaga (Amoeba).